The chain runs to 68 residues: Large ribosomal subunit protein uL29 (68 aa).

Belongs to the universal ribosomal protein uL29 family.

This Rhodopseudomonas palustris (strain BisA53) protein is Large ribosomal subunit protein uL29.